The following is a 332-amino-acid chain: Adenosine deaminase (332 aa).

Zn(2+) is bound by residues His12 and His14. Residues His14, Asp16, and Gly170 each contribute to the substrate site. His197 serves as a coordination point for Zn(2+). The active-site Proton donor is the Glu200. Asp278 contacts Zn(2+). Position 279 (Asp279) interacts with substrate.

It belongs to the metallo-dependent hydrolases superfamily. Adenosine and AMP deaminases family. Adenosine deaminase subfamily. It depends on Zn(2+) as a cofactor.

The enzyme catalyses adenosine + H2O + H(+) = inosine + NH4(+). The catalysed reaction is 2'-deoxyadenosine + H2O + H(+) = 2'-deoxyinosine + NH4(+). Catalyzes the hydrolytic deamination of adenosine and 2-deoxyadenosine. The chain is Adenosine deaminase from Serratia proteamaculans (strain 568).